The chain runs to 93 residues: Cobalt transport protein CbiN (93 aa).

The next 2 helical transmembrane spans lie at 5–25 (LMLLAMVVALVILPFFINHGG) and 63–83 (LLFTLQGSLGAAVIFYILGYC).

It belongs to the CbiN family. In terms of assembly, forms an energy-coupling factor (ECF) transporter complex composed of an ATP-binding protein (A component, CbiO), a transmembrane protein (T component, CbiQ) and 2 possible substrate-capture proteins (S components, CbiM and CbiN) of unknown stoichimetry.

It is found in the cell inner membrane. It functions in the pathway cofactor biosynthesis; adenosylcobalamin biosynthesis. Its function is as follows. Part of the energy-coupling factor (ECF) transporter complex CbiMNOQ involved in cobalt import. This Salmonella gallinarum (strain 287/91 / NCTC 13346) protein is Cobalt transport protein CbiN.